A 380-amino-acid polypeptide reads, in one-letter code: Cytochrome b (380 aa).

Helical transmembrane passes span 34–54, 78–99, 114–134, and 179–199; these read FGSLLGVCLIAQIATGLFLAM, WLLRNLHANGASFFFICIYFHI, WNIGVILLFLVMATAFVGYVL, and FFTFHFILPFIIAAASMIHLL. Heme b contacts are provided by His-84 and His-98. Heme b-binding residues include His-183 and His-197. His-202 is an a ubiquinone binding site. The next 4 helical transmembrane spans lie at 227–247, 289–309, 321–341, and 348–368; these read YKDLLGFVIMLGALASLSTFA, LGGVLALLLSIMVLFLMPIIH, IAKTFFWALIANTAILTWIGG, and FITIGQIASGLYFLIFVLLIP.

This sequence belongs to the cytochrome b family. In terms of assembly, the cytochrome bc1 complex contains 3 respiratory subunits (MT-CYB, CYC1 and UQCRFS1), 2 core proteins (UQCRC1 and UQCRC2) and probably 6 low-molecular weight proteins. It depends on heme b as a cofactor.

Its subcellular location is the mitochondrion inner membrane. Functionally, component of the ubiquinol-cytochrome c reductase complex (complex III or cytochrome b-c1 complex) that is part of the mitochondrial respiratory chain. The b-c1 complex mediates electron transfer from ubiquinol to cytochrome c. Contributes to the generation of a proton gradient across the mitochondrial membrane that is then used for ATP synthesis. This is Cytochrome b (mt-cyb) from Pelophylax nigromaculatus (Black-spotted frog).